A 300-amino-acid polypeptide reads, in one-letter code: 4-hydroxy-tetrahydrodipicolinate synthase (300 aa).

Threonine 49 is a binding site for pyruvate. Tyrosine 137 functions as the Proton donor/acceptor in the catalytic mechanism. Lysine 165 functions as the Schiff-base intermediate with substrate in the catalytic mechanism. Isoleucine 207 is a binding site for pyruvate.

This sequence belongs to the DapA family. Homotetramer; dimer of dimers.

It localises to the cytoplasm. The enzyme catalyses L-aspartate 4-semialdehyde + pyruvate = (2S,4S)-4-hydroxy-2,3,4,5-tetrahydrodipicolinate + H2O + H(+). It functions in the pathway amino-acid biosynthesis; L-lysine biosynthesis via DAP pathway; (S)-tetrahydrodipicolinate from L-aspartate: step 3/4. Functionally, catalyzes the condensation of (S)-aspartate-beta-semialdehyde [(S)-ASA] and pyruvate to 4-hydroxy-tetrahydrodipicolinate (HTPA). In Nitrosospira multiformis (strain ATCC 25196 / NCIMB 11849 / C 71), this protein is 4-hydroxy-tetrahydrodipicolinate synthase.